The primary structure comprises 142 residues: Bacilliredoxin ABC2448 (142 aa).

The protein belongs to the bacilliredoxin family.

This is Bacilliredoxin ABC2448 from Shouchella clausii (strain KSM-K16) (Alkalihalobacillus clausii).